The following is a 475-amino-acid chain: UDP-N-acetylmuramate--L-alanine ligase (475 aa).

Position 125 to 131 (glycine 125 to threonine 131) interacts with ATP.

Belongs to the MurCDEF family.

It is found in the cytoplasm. It carries out the reaction UDP-N-acetyl-alpha-D-muramate + L-alanine + ATP = UDP-N-acetyl-alpha-D-muramoyl-L-alanine + ADP + phosphate + H(+). It participates in cell wall biogenesis; peptidoglycan biosynthesis. Functionally, cell wall formation. The protein is UDP-N-acetylmuramate--L-alanine ligase of Actinobacillus pleuropneumoniae serotype 5b (strain L20).